A 461-amino-acid polypeptide reads, in one-letter code: tRNA-splicing endonuclease subunit Sen2 (461 aa).

2 disordered regions span residues 140–176 (GAEQ…TSSP) and 190–210 (GDPA…DVKE). A compositionally biased stretch (polar residues) spans 144-176 (TGDSCDTVCPNTENTELSGQSSTDTGNIATSSP). The segment covering 201–210 (KEQEPADVKE) has biased composition (basic and acidic residues). Catalysis depends on residues tyrosine 365, histidine 373, and lysine 412.

Belongs to the tRNA-intron endonuclease family. As to quaternary structure, tRNA splicing endonuclease is a heterotetramer composed of SEN2, SEN15, SEN34/LENG5 and SEN54.

The protein resides in the nucleus. The catalysed reaction is pretRNA = a 3'-half-tRNA molecule with a 5'-OH end + a 5'-half-tRNA molecule with a 2',3'-cyclic phosphate end + an intron with a 2',3'-cyclic phosphate and a 5'-hydroxyl terminus.. In terms of biological role, constitutes one of the two catalytic subunit of the tRNA-splicing endonuclease complex, a complex responsible for identification and cleavage of the splice sites in pre-tRNA. It cleaves pre-tRNA at the 5'- and 3'-splice sites to release the intron. The products are an intron and two tRNA half-molecules bearing 2',3'-cyclic phosphate and 5'-OH termini. There are no conserved sequences at the splice sites, but the intron is invariably located at the same site in the gene, placing the splice sites an invariant distance from the constant structural features of the tRNA body. Probably carries the active site for 5'-splice site cleavage. The tRNA splicing endonuclease is also involved in mRNA processing via its association with pre-mRNA 3'-end processing factors, establishing a link between pre-tRNA splicing and pre-mRNA 3'-end formation, suggesting that the endonuclease subunits function in multiple RNA-processing events. This Gallus gallus (Chicken) protein is tRNA-splicing endonuclease subunit Sen2 (TSEN2).